Reading from the N-terminus, the 161-residue chain is Cyclic pyranopterin monophosphate synthase (161 aa).

Substrate is bound by residues 75–77 and 113–114; these read LCH and ME. The active site involves Asp128.

Belongs to the MoaC family. In terms of assembly, homohexamer; trimer of dimers.

The enzyme catalyses (8S)-3',8-cyclo-7,8-dihydroguanosine 5'-triphosphate = cyclic pyranopterin phosphate + diphosphate. It functions in the pathway cofactor biosynthesis; molybdopterin biosynthesis. Its function is as follows. Catalyzes the conversion of (8S)-3',8-cyclo-7,8-dihydroguanosine 5'-triphosphate to cyclic pyranopterin monophosphate (cPMP). This is Cyclic pyranopterin monophosphate synthase from Enterobacter sp. (strain 638).